Consider the following 500-residue polypeptide: Amino-acid acetyltransferase, mitochondrial (500 aa).

Residues 1-19 constitute a mitochondrion transit peptide; sequence MQKPSLSQDLIWILKSVQS. Positions 336 to 496 constitute an N-acetyltransferase domain; it reads FLGPKCLTDG…YMSVIDKIQP (161 aa).

Belongs to the acetyltransferase family.

It localises to the mitochondrion. The catalysed reaction is L-glutamate + acetyl-CoA = N-acetyl-L-glutamate + CoA + H(+). Its pathway is amino-acid biosynthesis; L-arginine biosynthesis; N(2)-acetyl-L-ornithine from L-glutamate: step 1/4. Its function is as follows. N-acetylglutamate synthase involved in arginine biosynthesis. The polypeptide is Amino-acid acetyltransferase, mitochondrial (arg6) (Schizosaccharomyces pombe (strain 972 / ATCC 24843) (Fission yeast)).